A 602-amino-acid polypeptide reads, in one-letter code: Putative pentatricopeptide repeat-containing protein At1g12700, mitochondrial (602 aa).

The transit peptide at 1–95 (MMIKRSITTN…PSLVDFSRFF (95 aa)) directs the protein to the mitochondrion. PPR repeat units lie at residues 87–121 (SLVD…GIAH), 122–156 (NIYT…GYEP), 157–191 (DTTT…GCQP), 192–226 (DVVT…NVKA), 227–261 (DVFT…GIKS), 262–296 (SVVT…EIVP), 297–331 (NVIT…GISP), 332–366 (NIIT…KCSP), 367–401 (DIVT…GLVA), 402–436 (NAVT…GVLP), 437–471 (DVMT…KMDL), 472–506 (GIVM…GVKP), 507–541 (NVMT…GNAP), and 542–576 (NDCT…GFSA).

Belongs to the PPR family. P subfamily.

It localises to the mitochondrion. The sequence is that of Putative pentatricopeptide repeat-containing protein At1g12700, mitochondrial from Arabidopsis thaliana (Mouse-ear cress).